Reading from the N-terminus, the 321-residue chain is Secreted RxLR effector protein 71 (321 aa).

Residues 1-23 (MRPTGWRWPVLSLLLVLLPFQAA) form the signal peptide. The RxLR signature appears at 84 to 87 (RSLR). Asn114 carries an N-linked (GlcNAc...) asparagine glycan. The interval 210-237 (VSLGRDGNGPVRGISSSPTRLTRPRMGG) is disordered.

Belongs to the RxLR effector family.

The protein resides in the secreted. It localises to the host cell. In terms of biological role, secreted effector that partially suppresses the host cell death induced by cell death-inducing proteins. The polypeptide is Secreted RxLR effector protein 71 (Plasmopara viticola (Downy mildew of grapevine)).